The primary structure comprises 466 residues: Cysteine--tRNA ligase (466 aa).

Cys-29 provides a ligand contact to Zn(2+). Residues 31–41 (PTVYDFAHIGN) carry the 'HIGH' region motif. 3 residues coordinate Zn(2+): Cys-210, His-235, and Glu-239. The short motif at 267-271 (KMSKS) is the 'KMSKS' region element. Lys-270 lines the ATP pocket.

It belongs to the class-I aminoacyl-tRNA synthetase family. Monomer. It depends on Zn(2+) as a cofactor.

The protein localises to the cytoplasm. The enzyme catalyses tRNA(Cys) + L-cysteine + ATP = L-cysteinyl-tRNA(Cys) + AMP + diphosphate. This is Cysteine--tRNA ligase from Solibacter usitatus (strain Ellin6076).